The following is a 197-amino-acid chain: Holliday junction branch migration complex subunit RuvA (197 aa).

The segment at 1–64 (MIDSIVGIIQ…LSELECYGFL (64 aa)) is domain I. The tract at residues 65–143 (TREERELFLK…KEFKVASTSG (79 aa)) is domain II. The segment at 144-152 (KEEKTYEKL) is flexible linker. The segment at 152 to 197 (LEEISLALLSLGYDIDEVNQVLSSEDFSELSLEDGIKLALKKLSKI) is domain III.

The protein belongs to the RuvA family. Homotetramer. Forms an RuvA(8)-RuvB(12)-Holliday junction (HJ) complex. HJ DNA is sandwiched between 2 RuvA tetramers; dsDNA enters through RuvA and exits via RuvB. An RuvB hexamer assembles on each DNA strand where it exits the tetramer. Each RuvB hexamer is contacted by two RuvA subunits (via domain III) on 2 adjacent RuvB subunits; this complex drives branch migration. In the full resolvosome a probable DNA-RuvA(4)-RuvB(12)-RuvC(2) complex forms which resolves the HJ.

The protein resides in the cytoplasm. The RuvA-RuvB-RuvC complex processes Holliday junction (HJ) DNA during genetic recombination and DNA repair, while the RuvA-RuvB complex plays an important role in the rescue of blocked DNA replication forks via replication fork reversal (RFR). RuvA specifically binds to HJ cruciform DNA, conferring on it an open structure. The RuvB hexamer acts as an ATP-dependent pump, pulling dsDNA into and through the RuvAB complex. HJ branch migration allows RuvC to scan DNA until it finds its consensus sequence, where it cleaves and resolves the cruciform DNA. The protein is Holliday junction branch migration complex subunit RuvA of Caldicellulosiruptor bescii (strain ATCC BAA-1888 / DSM 6725 / KCTC 15123 / Z-1320) (Anaerocellum thermophilum).